The primary structure comprises 428 residues: Flotillin-2 (428 aa).

A lipid anchor (N-myristoyl glycine) is attached at Gly-2. The S-palmitoyl cysteine; by ZDHHC5 moiety is linked to residue Cys-4. The S-palmitoyl cysteine moiety is linked to residue Cys-19. Cys-20 carries S-palmitoyl cysteine; by ZDHHC5 lipidation. Ser-405 carries the phosphoserine modification.

The protein belongs to the band 7/mec-2 family. Flotillin subfamily. In terms of assembly, heterooligomeric complex of flotillin-1 and flotillin-2 and caveolin-1 and caveolin-2. Interacts with ECPAS. Post-translationally, ZDHHC5-catalyzed palmitoylation predominantly occurs at Cys-4. ZDHHC5-catalyzed palmitoylation may be required for the formation of higher-order complexes and for neurite outgrowth in cultured neural stem cells. In skin, expressed in epidermis and epidermal appendages but not in dermis. Expressed in all layers of the epidermis except the basal layer. In hair follicles, expressed in the suprabasal layer but not the basal layer. Also expressed in melanoma and carcinoma cell lines, fibroblasts and foreskin melanocytes.

It localises to the cell membrane. The protein resides in the membrane. It is found in the caveola. The protein localises to the endosome. May act as a scaffolding protein within caveolar membranes, functionally participating in formation of caveolae or caveolae-like vesicles. May be involved in epidermal cell adhesion and epidermal structure and function. The protein is Flotillin-2 (FLOT2) of Homo sapiens (Human).